The sequence spans 97 residues: MKFAAILLVTCVLFSLLPSHLSQGEESSMNIDAQRRPWCPSKKQVFGGSCGNDGAQQCLNNLLSTWDPSVRLSPVSCNCTPQPNNNILCSCPNMICP.

The signal sequence occupies residues 1-24 (MKFAAILLVTCVLFSLLPSHLSQG). 4 disulfide bridges follow: Cys39–Cys96, Cys50–Cys79, Cys58–Cys89, and Cys77–Cys91.

Belongs to the DEFL family. In terms of tissue distribution, flower buds and roots.

The protein localises to the secreted. This Arabidopsis thaliana (Mouse-ear cress) protein is Defensin-like protein 245 (SCRL4).